A 100-amino-acid chain; its full sequence is UPF0213 protein YhbQ (100 aa).

The region spanning 2–77 (TPWFLYLIRT…KQLTKRQKER (76 aa)) is the GIY-YIG domain.

It belongs to the UPF0213 family.

This chain is UPF0213 protein YhbQ, found in Escherichia fergusonii (strain ATCC 35469 / DSM 13698 / CCUG 18766 / IAM 14443 / JCM 21226 / LMG 7866 / NBRC 102419 / NCTC 12128 / CDC 0568-73).